Reading from the N-terminus, the 494-residue chain is UPF0371 protein M6_Spy1067 (494 aa).

This sequence belongs to the UPF0371 family.

The polypeptide is UPF0371 protein M6_Spy1067 (Streptococcus pyogenes serotype M6 (strain ATCC BAA-946 / MGAS10394)).